The primary structure comprises 356 residues: Protein RecA (356 aa).

Gly-68–Thr-75 is an ATP binding site.

Belongs to the RecA family.

The protein localises to the cytoplasm. In terms of biological role, can catalyze the hydrolysis of ATP in the presence of single-stranded DNA, the ATP-dependent uptake of single-stranded DNA by duplex DNA, and the ATP-dependent hybridization of homologous single-stranded DNAs. It interacts with LexA causing its activation and leading to its autocatalytic cleavage. In Clostridium botulinum (strain Eklund 17B / Type B), this protein is Protein RecA.